We begin with the raw amino-acid sequence, 281 residues long: Bis(5'-nucleosyl)-tetraphosphatase, symmetrical (281 aa).

This sequence belongs to the Ap4A hydrolase family.

It catalyses the reaction P(1),P(4)-bis(5'-adenosyl) tetraphosphate + H2O = 2 ADP + 2 H(+). Hydrolyzes diadenosine 5',5'''-P1,P4-tetraphosphate to yield ADP. This chain is Bis(5'-nucleosyl)-tetraphosphatase, symmetrical, found in Acidovorax sp. (strain JS42).